Consider the following 240-residue polypeptide: DNA repair protein RecO (240 aa).

The protein belongs to the RecO family.

Its function is as follows. Involved in DNA repair and RecF pathway recombination. This chain is DNA repair protein RecO, found in Pseudoalteromonas atlantica (strain T6c / ATCC BAA-1087).